Consider the following 313-residue polypeptide: Olfactory receptor 5H15 (313 aa).

At Met-1–Phe-28 the chain is on the extracellular side. An N-linked (GlcNAc...) asparagine glycan is attached at Asn-5. A helical transmembrane segment spans residues Leu-29–Ile-49. Over Trp-50–His-56 the chain is Cytoplasmic. The chain crosses the membrane as a helical span at residues Ile-57–Val-77. Over Thr-78–Lys-98 the chain is Extracellular. A disulfide bridge links Cys-97 with Cys-179. A helical membrane pass occupies residues Ile-99–Ala-119. Residues Tyr-120–Arg-143 are Cytoplasmic-facing. A helical transmembrane segment spans residues Leu-144 to Phe-164. Over Arg-165–Asn-195 the chain is Extracellular. The chain crosses the membrane as a helical span at residues Phe-196–Ile-216. Topologically, residues Ser-217 to Thr-240 are cytoplasmic. A helical membrane pass occupies residues Cys-241 to Gly-261. Topologically, residues Pro-262–Asn-271 are extracellular. Residues Met-272–Leu-292 form a helical membrane-spanning segment. The Cytoplasmic portion of the chain corresponds to Arg-293–Tyr-313.

This sequence belongs to the G-protein coupled receptor 1 family.

It is found in the cell membrane. Functionally, odorant receptor. This is Olfactory receptor 5H15 (OR5H15) from Homo sapiens (Human).